A 335-amino-acid polypeptide reads, in one-letter code: Beta-hexosaminidase (335 aa).

Substrate-binding positions include aspartate 60, arginine 68, arginine 133, and 163–164 (KH). Histidine 176 (proton donor/acceptor) is an active-site residue. Aspartate 247 (nucleophile) is an active-site residue.

This sequence belongs to the glycosyl hydrolase 3 family. NagZ subfamily.

The protein resides in the cytoplasm. The catalysed reaction is Hydrolysis of terminal non-reducing N-acetyl-D-hexosamine residues in N-acetyl-beta-D-hexosaminides.. The protein operates within cell wall biogenesis; peptidoglycan recycling. Its function is as follows. Plays a role in peptidoglycan recycling by cleaving the terminal beta-1,4-linked N-acetylglucosamine (GlcNAc) from peptide-linked peptidoglycan fragments, giving rise to free GlcNAc, anhydro-N-acetylmuramic acid and anhydro-N-acetylmuramic acid-linked peptides. This is Beta-hexosaminidase from Xylella fastidiosa (strain M23).